The chain runs to 145 residues: uncharacterized protein (145 aa).

This is an uncharacterized protein from Rhizobium radiobacter (Agrobacterium tumefaciens).